Consider the following 1882-residue polypeptide: MFSFFKQIFKSLKKFFFLLFGIIFVLFSIIFLETSILQLSNNLVNTYTALVQKTNSSDIVAPAIFKESSPVYKTELKEEKRHFSKIKLTEKKINFIWPYQESDFGSDSEKKDSTTKSSDNNPRKGDVNDKDKLFLARKRGILKAYGEANIAEKRIYKGLAVSFQNTYSFTGTDQESNNLNQNTVSDPQNLIYDKEGNLLGYFVDGLILDGIPLRAGIARFPGDKGKGEDKKTTKKKSEIKQASSATTVLQPLAAQAKMTDAKETTNNEEPKKDSNVEEQYTTNNKDKVWFKSDETQAGSSSGESETSKLSTSYLFTGGQEAANWFPNLYANVPIVLPISPGSQFWLETNPFKEIIEVFQKEKEEKEKQSFSLTFTLDTSKLSHLDKEEFDWLEKQAETISSGSSFGDYNLKKKINSLKSFELNINKDWLKNKVKAEKETILDSLPGFSNSDKNTIFSTQSGDAKSGTQSNPSSLIALRSSVSFKPQLQQTNVALAQQQQDKQESSADDGVKDPTFSDVQTEFDKIGTENHTPQKNLNNVYAALLHQWKSIFQEDLVKKVTALLEKYRDAFLKAKALKELEFSRQNLAIATNVSSEESASFLVSNKDSQKYNDLSIIEGINFKSWLAKEKSNPLDMVYGGKSNSEGFLEKVEYEFKPTQTDEKKKAAAKTTQGTTDSLTQLADASSSSSSSSTGDTKSTSTKFQIYPKLANILAQAQLPEASSIPDTLTNAIKQWSTLDKKGFEALDDTGKSKAANNYVALLSYFTPEFQDPNELVVTNRQKLDIPIIFKNGVNPLTLPTDQQSLVVQTPEAHGAVVSQQWLFKHDKEVLPLEGEYSWKEALENPKNLPNWLNDLPDKYKFSINGLTFAILGVGESVETGYPVLSTNSPLPNSQDEGLIFLNEQGYRSVLFAVPAASEENYYAFKSDDIKAKFPGQDPIQVVASKLKGYLNVPDSDLAFNVKDISKFQYLTTARNYFPDLVQNYLAIASVVIAAFLSILALYLTILLIKSFIKKNQTEFSIIRAGGFSTAKFIAGMSVFAGIVALASSFFGVLFAFLLERQVKGIISRYWFIALPANSFNWISFFGSMLLIFVIFQFISWIAFKQLFSKPVNVLIDQGNETKFSVFLHLLKRKSYTMTPLGKFRVSLIISRLSRLFTYVGLSSIALLLIGIAGTIPQKFGAAQSNTVLNRNFNYRLNLQTPTEQSGWYAIQPYSRFGQTDDSLGIKALYKDKGDQIQQQQQQQQQQGNDKEHPYNLKELKISDRGGNPIKHNGKEIELGNLLLPSFGGAQQLNTDENFFRHASLSKWLIDFPIRVGGANINPWEIVEKSIPKQITQLLSASSDQFLIAVLTDDYFNNLNNNGFLTRNPRTNFIQLDAARVLTQINVFNPGGVKFNEQFLKFLTKVYGDPELSYQDSKLTYGIVPVDPQIEETYTYVQGPFGFKETELNPDSPYTLTGISPDSKFVNLTDSGGNSLRSLISSDSEMNVIVNAGFQYANNTKIGDFIFIQPKNTATRYSEKFLKSPPKTPTVKFRVVGVSTDAFGQELYINQNIANRLLKLNGFDGRGVIKDVVKDGQSTDDSGGTSSGGGSCGGGSTSSTTKDKYKIEYVKPTGYVPFNGVFSKELNPSLVSKALVLNSNIGVWGNFTDFGNNFTNLVKGKENKIITSILPSDPDILKQLAKEKGENGVDSMTYENLRKKVIEKYTSEWSSTQSLASGARGIFGDNIMVPALKLDAAGASAQIIRNNAEVLFNTVNQVDGFLLGTIIPFIFITCVVLGISMLEEMKRIFISLKSIGYKDSQNLVSLLCFFIPAFVLSLLISIAILAGLLVGVQALVFGVAQVFLTNVFEFLPYMVGIVLFGATIFVIGSYFWIKLRSAELKEGF.

A helical transmembrane segment spans residues 16 to 36 (FFLLFGIIFVLFSIIFLETSI). Disordered regions lie at residues 103–129 (DFGSDSEKKDSTTKSSDNNPRKGDVND), 220–306 (FPGD…ESET), 492–513 (VALAQQQQDKQESSADDGVKDP), and 658–698 (QTDE…TKST). A compositionally biased stretch (basic and acidic residues) spans 221–239 (PGDKGKGEDKKTTKKKSEI). Positions 240–249 (KQASSATTVL) are enriched in polar residues. Basic and acidic residues-rich tracts occupy residues 259–275 (TDAKETTNNEEPKKDSN), 284–294 (NKDKVWFKSDE), and 500–511 (DKQESSADDGVK). Residues 667–698 (AKTTQGTTDSLTQLADASSSSSSSSTGDTKST) are compositionally biased toward low complexity. 4 helical membrane-spanning segments follow: residues 987 to 1007 (ASVVIAAFLSILALYLTILLI), 1037 to 1057 (VFAGIVALASSFFGVLFAFLL), 1080 to 1100 (WISFFGSMLLIFVIFQFISWI), and 1154 to 1174 (LFTYVGLSSIALLLIGIAGTI). Disordered stretches follow at residues 1233–1253 (DQIQQQQQQQQQQGNDKEHPY) and 1572–1598 (KDGQSTDDSGGTSSGGGSCGGGSTSST). Positions 1234–1245 (QIQQQQQQQQQQ) are enriched in low complexity. Positions 1583–1594 (TSSGGGSCGGGS) are enriched in gly residues. A run of 4 helical transmembrane segments spans residues 1759–1779 (FLLGTIIPFIFITCVVLGISM), 1807–1827 (FFIPAFVLSLLISIAILAGLL), 1828–1848 (VGVQALVFGVAQVFLTNVFEF), and 1851–1871 (YMVGIVLFGATIFVIGSYFWI).

Belongs to the ABC-4 integral membrane protein family.

It is found in the cell membrane. This is an uncharacterized protein from Mycoplasma pneumoniae (strain ATCC 29342 / M129 / Subtype 1) (Mycoplasmoides pneumoniae).